The sequence spans 451 residues: Methionine aminopeptidase 2-2 (451 aa).

The disordered stretch occupies residues 1–97 (MAAQVEDDVA…PRVLISDLFP (97 aa)). Residues 19–28 (TKPTNGTSQP) are compositionally biased toward polar residues. The span at 35 to 45 (EAEDSDDDAEG) shows a compositional bias: acidic residues. Positions 60-73 (KKKKKRKPRKKKKA) are enriched in basic residues. The segment covering 74–83 (GTSATAGAKS) has biased composition (low complexity). Residue histidine 204 coordinates substrate. The a divalent metal cation site is built by aspartate 224, aspartate 235, and histidine 304. Residue histidine 312 participates in substrate binding. 2 residues coordinate a divalent metal cation: glutamate 337 and glutamate 432.

It belongs to the peptidase M24A family. Methionine aminopeptidase eukaryotic type 2 subfamily. Co(2+) serves as cofactor. It depends on Zn(2+) as a cofactor. The cofactor is Mn(2+). Requires Fe(2+) as cofactor.

It is found in the cytoplasm. The enzyme catalyses Release of N-terminal amino acids, preferentially methionine, from peptides and arylamides.. Functionally, cotranslationally removes the N-terminal methionine from nascent proteins. The N-terminal methionine is often cleaved when the second residue in the primary sequence is small and uncharged (Met-Ala-, Cys, Gly, Pro, Ser, Thr, or Val). The protein is Methionine aminopeptidase 2-2 of Leptosphaeria maculans (strain JN3 / isolate v23.1.3 / race Av1-4-5-6-7-8) (Blackleg fungus).